Consider the following 312-residue polypeptide: MADGVSVSELVEKIRLDVFYGDELLEQKKVTVSDISRPGLELTNYFKFYPHERIQLFGETEISYAKDSMTKDERTKIYDRMADVDTPAFVVSRGLPIPEELIQAAKNNQVPILTSTLPTSRLLSNMTNFLEDRLAERDSIHGELLEIYGLGVLITGDSGIGKSETALDLIKRGHRLIADDRVDIYQQDEQTLIGEAPRILRHLLEIRGVGIIDVMNLFGASAVKNHTEISVIVHLQNWDKDAHFDRLGNGEQTRHFFELDIPKITIPVRVGRNLGDIIEAATMNFRAKNMGYDATKVFDRNLNELIKDNSQK.

Residues H141 and K162 contribute to the active site. An ATP-binding site is contributed by 156 to 163 (GDSGIGKS). A Mg(2+)-binding site is contributed by S163. D180 (proton acceptor; for phosphorylation activity. Proton donor; for dephosphorylation activity) is an active-site residue. The interval 204 to 213 (LEIRGVGIID) is important for the catalytic mechanism of both phosphorylation and dephosphorylation. E205 contacts Mg(2+). R246 is an active-site residue. The interval 267–272 (PVRVGR) is important for the catalytic mechanism of dephosphorylation.

This sequence belongs to the HPrK/P family. In terms of assembly, homohexamer. Requires Mg(2+) as cofactor.

The catalysed reaction is [HPr protein]-L-serine + ATP = [HPr protein]-O-phospho-L-serine + ADP + H(+). It carries out the reaction [HPr protein]-O-phospho-L-serine + phosphate + H(+) = [HPr protein]-L-serine + diphosphate. In terms of biological role, catalyzes the ATP- as well as the pyrophosphate-dependent phosphorylation of a specific serine residue in HPr, a phosphocarrier protein of the phosphoenolpyruvate-dependent sugar phosphotransferase system (PTS). HprK/P also catalyzes the pyrophosphate-producing, inorganic phosphate-dependent dephosphorylation (phosphorolysis) of seryl-phosphorylated HPr (P-Ser-HPr). The two antagonistic activities of HprK/P are regulated by several intracellular metabolites, which change their concentration in response to the absence or presence of rapidly metabolisable carbon sources (glucose, fructose, etc.) in the growth medium. Therefore, by controlling the phosphorylation state of HPr, HPrK/P is a sensor enzyme that plays a major role in the regulation of carbon metabolism and sugar transport: it mediates carbon catabolite repression (CCR), and regulates PTS-catalyzed carbohydrate uptake and inducer exclusion. The sequence is that of HPr kinase/phosphorylase from Pediococcus pentosaceus (strain ATCC 25745 / CCUG 21536 / LMG 10740 / 183-1w).